A 253-amino-acid chain; its full sequence is E3 ubiquitin-protein ligase MARCHF3 (253 aa).

Residues 63 to 123 (SPFNDRPMCR…ELCHFRFAVE (61 aa)) form an RING-CH-type zinc finger. Zn(2+) contacts are provided by C71, C74, C87, C89, H97, C100, C113, and C116. Helical transmembrane passes span 145 to 165 (LFGD…SGWL) and 182 to 202 (AVGL…WTLV). A phosphoserine mark is found at S237 and S243.

Interacts with MARCHF2 and STX6.

It localises to the cytoplasmic vesicle membrane. It is found in the early endosome membrane. The catalysed reaction is S-ubiquitinyl-[E2 ubiquitin-conjugating enzyme]-L-cysteine + [acceptor protein]-L-lysine = [E2 ubiquitin-conjugating enzyme]-L-cysteine + N(6)-ubiquitinyl-[acceptor protein]-L-lysine.. Its pathway is protein modification; protein ubiquitination. Its function is as follows. E3 ubiquitin-protein ligase which may be involved in endosomal trafficking. E3 ubiquitin ligases accept ubiquitin from an E2 ubiquitin-conjugating enzyme in the form of a thioester and then directly transfer the ubiquitin to targeted substrates. The protein is E3 ubiquitin-protein ligase MARCHF3 (MARCHF3) of Bos taurus (Bovine).